We begin with the raw amino-acid sequence, 323 residues long: Breast cancer metastasis-suppressor 1-like protein-A (323 aa).

The segment covering 1 to 15 (MPVHSREKKESNHEE) has biased composition (basic and acidic residues). The segment at 1–52 (MPVHSREKKESNHEEMEVDFAEQEGSSSEDEDTESSSVSEDGESSEMDDEDC) is disordered. Residues 16–51 (MEVDFAEQEGSSSEDEDTESSSVSEDGESSEMDDED) show a composition bias toward acidic residues. Coiled coils occupy residues 50–81 (EDCE…YKER) and 156–178 (QTEL…ITSE).

This sequence belongs to the BRMS1 family.

It localises to the nucleus. Involved in the histone deacetylase (HDAC1)-dependent transcriptional repression activity. This chain is Breast cancer metastasis-suppressor 1-like protein-A (brms1la), found in Danio rerio (Zebrafish).